We begin with the raw amino-acid sequence, 364 residues long: Fructose-bisphosphate aldolase A (364 aa).

Tyrosine 5 bears the Phosphotyrosine mark. Threonine 9 is modified (phosphothreonine). Residues serine 36 and serine 39 each carry the phosphoserine modification. Position 42 is an N6-acetyllysine; alternate (lysine 42). Lysine 42 is covalently cross-linked (Glycyl lysine isopeptide (Lys-Gly) (interchain with G-Cter in SUMO1); alternate). Lysine 42 participates in a covalent cross-link: Glycyl lysine isopeptide (Lys-Gly) (interchain with G-Cter in SUMO2); alternate. Beta-D-fructose 1,6-bisphosphate is bound at residue arginine 43. The residue at position 46 (serine 46) is a Phosphoserine. Lysine 99 bears the N6-(2-hydroxyisobutyryl)lysine mark. Residue lysine 108 is modified to N6-acetyllysine. Residue lysine 111 is modified to N6-acetyllysine; alternate. The residue at position 111 (lysine 111) is an N6-malonyllysine; alternate. A Phosphoserine modification is found at serine 132. Lysine 147 carries the N6-(2-hydroxyisobutyryl)lysine modification. Glutamate 188 (proton acceptor) is an active-site residue. Lysine 230 serves as the catalytic Schiff-base intermediate with dihydroxyacetone-P. Serine 272 is modified (phosphoserine). Beta-D-fructose 1,6-bisphosphate-binding positions include 272-274 (SGG), serine 301, and arginine 304. Position 312 is an N6-malonyllysine (lysine 312). Lysine 330 is modified (N6-acetyllysine).

The protein belongs to the class I fructose-bisphosphate aldolase family. As to quaternary structure, homotetramer. Interacts with SNX9 and WAS. Interacts with FBP2; the interaction blocks FBP2 inhibition by physiological concentrations of AMP and reduces inhibition by Ca(2+).

Its subcellular location is the cytoplasm. It is found in the myofibril. The protein resides in the sarcomere. It localises to the i band. The protein localises to the m line. The catalysed reaction is beta-D-fructose 1,6-bisphosphate = D-glyceraldehyde 3-phosphate + dihydroxyacetone phosphate. It functions in the pathway carbohydrate degradation; glycolysis; D-glyceraldehyde 3-phosphate and glycerone phosphate from D-glucose: step 4/4. In terms of biological role, catalyzes the reversible conversion of beta-D-fructose 1,6-bisphosphate (FBP) into two triose phosphate and plays a key role in glycolysis and gluconeogenesis. In addition, may also function as scaffolding protein. The sequence is that of Fructose-bisphosphate aldolase A from Homo sapiens (Human).